Reading from the N-terminus, the 289-residue chain is MNGILNVYKPIGITSFDVVCQIKKITGIKKIGHTGTLDPLACGVLPVCIGKGTKVVDYLMKDFKVYDATFKLGIITDTYDREGKELSISEVNVSLDEIECAVNSFLGDSFQVPPMYSALKVNGKRLYELAREGKSIEREARPITIYDINILHIDIPYVKFRVKCSKGTYIRSLCYDIGSNLKCGATMWDLERVQSGAFTKENSIELNKLTTDNINDYIISIDESLNQYDKAFVSSKCEKLLVNGVRIGDKRLLPNLDINKMYRIYSEDNKFLGLGMRNSKGLKIEKLLL.

The active-site Nucleophile is Asp-38.

The protein belongs to the pseudouridine synthase TruB family. Type 1 subfamily.

The enzyme catalyses uridine(55) in tRNA = pseudouridine(55) in tRNA. Functionally, responsible for synthesis of pseudouridine from uracil-55 in the psi GC loop of transfer RNAs. The protein is tRNA pseudouridine synthase B of Clostridium novyi (strain NT).